A 161-amino-acid polypeptide reads, in one-letter code: 6,7-dimethyl-8-ribityllumazine synthase (161 aa).

5-amino-6-(D-ribitylamino)uracil is bound by residues W25, 57–59 (AFE), and 80–82 (VVI). 85–86 (GT) serves as a coordination point for (2S)-2-hydroxy-3-oxobutyl phosphate. Catalysis depends on H88, which acts as the Proton donor. F113 is a binding site for 5-amino-6-(D-ribitylamino)uracil. (2S)-2-hydroxy-3-oxobutyl phosphate is bound at residue R127.

It belongs to the DMRL synthase family.

It catalyses the reaction (2S)-2-hydroxy-3-oxobutyl phosphate + 5-amino-6-(D-ribitylamino)uracil = 6,7-dimethyl-8-(1-D-ribityl)lumazine + phosphate + 2 H2O + H(+). Its pathway is cofactor biosynthesis; riboflavin biosynthesis; riboflavin from 2-hydroxy-3-oxobutyl phosphate and 5-amino-6-(D-ribitylamino)uracil: step 1/2. In terms of biological role, catalyzes the formation of 6,7-dimethyl-8-ribityllumazine by condensation of 5-amino-6-(D-ribitylamino)uracil with 3,4-dihydroxy-2-butanone 4-phosphate. This is the penultimate step in the biosynthesis of riboflavin. This chain is 6,7-dimethyl-8-ribityllumazine synthase, found in Kineococcus radiotolerans (strain ATCC BAA-149 / DSM 14245 / SRS30216).